The primary structure comprises 511 residues: Bifunctional purine biosynthesis protein PurH (511 aa).

Residues 1 to 145 (MKRRALVSVS…KNHQHVTVVV (145 aa)) form the MGS-like domain.

It belongs to the PurH family.

The catalysed reaction is (6R)-10-formyltetrahydrofolate + 5-amino-1-(5-phospho-beta-D-ribosyl)imidazole-4-carboxamide = 5-formamido-1-(5-phospho-D-ribosyl)imidazole-4-carboxamide + (6S)-5,6,7,8-tetrahydrofolate. It carries out the reaction IMP + H2O = 5-formamido-1-(5-phospho-D-ribosyl)imidazole-4-carboxamide. It participates in purine metabolism; IMP biosynthesis via de novo pathway; 5-formamido-1-(5-phospho-D-ribosyl)imidazole-4-carboxamide from 5-amino-1-(5-phospho-D-ribosyl)imidazole-4-carboxamide (10-formyl THF route): step 1/1. The protein operates within purine metabolism; IMP biosynthesis via de novo pathway; IMP from 5-formamido-1-(5-phospho-D-ribosyl)imidazole-4-carboxamide: step 1/1. This Halalkalibacterium halodurans (strain ATCC BAA-125 / DSM 18197 / FERM 7344 / JCM 9153 / C-125) (Bacillus halodurans) protein is Bifunctional purine biosynthesis protein PurH.